The chain runs to 341 residues: Cyclic GMP-AMP synthase-like receptor (341 aa).

ATP contacts are provided by residues S64 and 77 to 79 (EFD). 3 residues coordinate Mg(2+): E77, D79, and D172. Position 172 (D172) interacts with GTP. ATP is bound by residues K230 and 246–250 (SYHIK). Position 258 (E258) interacts with Mn(2+).

Belongs to the mab-21 family. Mg(2+) is required as a cofactor. Mn(2+) serves as cofactor.

The enzyme catalyses GTP + ATP = 2',3'-cGAMP + 2 diphosphate. The catalysed reaction is GTP + ATP = pppGp(2'-5')A + diphosphate. It catalyses the reaction pppGp(2'-5')A = 2',3'-cGAMP + diphosphate. In terms of biological role, nucleotidyltransferase that catalyzes the formation of cyclic GMP-AMP (2',3'-cGAMP) from ATP and GTP and plays a key role in innate immunity. Acts as a key sensor of double-stranded RNA (dsRNA), the presence of dsRNA in the cytoplasm being a danger signal that triggers the immune responses. Directly binds dsRNA, activating the nucleotidyltransferase activity, leading to synthesis of 2',3'-cGAMP, a second messenger that binds to and activates Sting, thereby triggering the immune response via activation of the NF-kappa-B transcription factor. This is Cyclic GMP-AMP synthase-like receptor from Hydra vulgaris (Hydra).